Reading from the N-terminus, the 246-residue chain is Hydroxyacylglutathione hydrolase (246 aa).

Zn(2+) contacts are provided by histidine 58, histidine 60, aspartate 62, histidine 63, histidine 117, aspartate 137, and histidine 175.

It belongs to the metallo-beta-lactamase superfamily. Glyoxalase II family. As to quaternary structure, monomer. The cofactor is Zn(2+).

It catalyses the reaction an S-(2-hydroxyacyl)glutathione + H2O = a 2-hydroxy carboxylate + glutathione + H(+). It participates in secondary metabolite metabolism; methylglyoxal degradation; (R)-lactate from methylglyoxal: step 2/2. Thiolesterase that catalyzes the hydrolysis of S-D-lactoyl-glutathione to form glutathione and D-lactic acid. This Prochlorococcus marinus (strain MIT 9301) protein is Hydroxyacylglutathione hydrolase.